A 260-amino-acid chain; its full sequence is UPF0246 protein Bcep1808_2308 (260 aa).

It belongs to the UPF0246 family.

This chain is UPF0246 protein Bcep1808_2308, found in Burkholderia vietnamiensis (strain G4 / LMG 22486) (Burkholderia cepacia (strain R1808)).